The chain runs to 190 residues: dTTP/UTP pyrophosphatase (190 aa).

D71 acts as the Proton acceptor in catalysis.

This sequence belongs to the Maf family. YhdE subfamily. It depends on a divalent metal cation as a cofactor.

The protein localises to the cytoplasm. The enzyme catalyses dTTP + H2O = dTMP + diphosphate + H(+). It carries out the reaction UTP + H2O = UMP + diphosphate + H(+). Functionally, nucleoside triphosphate pyrophosphatase that hydrolyzes dTTP and UTP. May have a dual role in cell division arrest and in preventing the incorporation of modified nucleotides into cellular nucleic acids. In Xanthomonas euvesicatoria pv. vesicatoria (strain 85-10) (Xanthomonas campestris pv. vesicatoria), this protein is dTTP/UTP pyrophosphatase.